The chain runs to 1183 residues: MEEFDLVKTLHKTSSSVGSDENSLHSLGLNLNTDRSSPHLSTNGVSSFSGKTRPSVIQGTVEVLTSLMQELQNSGKTDSELWKNCETRWLQLFNLVEKQCQEQIVAQQEQFHNQIQHIQEEIKNLVKLQTSSASLASCEGNSSNKQVSSESQMGFFSLSSERNESVIHYPESTEPEIQQEMSTSQPDCNVDSCSVSSGYGTFCISELNLYKSKDPKEFMEHIDVPKGQYVAPAVPAESLVDGVKNENFYIQTPEECHVSLKEDVSISPGEFEHNFLGENKVSEVYSGKTNSNAITSWAQKLKQNQPKRAHVEDGGSRSKQGNEQSKKTPIEKSDFAAATHPRAFYLSKPDETPNAWMSDSGTGLTYWKLEEKDMHHSLPETLEKTFISLSSTDVSPNQSNTSNEMKLPSLKDIYYKKQRENKQLPERNLTSASNPNHPPEVLTLDPTLHMKPKQQISGIQPHGLPNALDDRISFSPDSVLEPSMSSPSDIDSFSQASNVTSQLPGFPKYPSHTKASPVDSWKNQTFQNESRTSSTFPSVYTITSNDISVNTVDEENTVMVASASVSQSQLPGTANSVPECISLTSLEDPVILSKIRQNLKEKHARHIADLRAYYESEINSLKQKLEAKEISGVEDWKITNQILVDRCGQLDSALHEATSRVRTLENKNNLLEIEVNDLRERFSAASSASKILQERIEEMRTSSKEKDNTIIRLKSRLQDLEEAFENAYKLSDDKEAQLKQENKMFQDLLGEYESLGKEHRRVKDALNTTENKLLDAYTQISDLKRMISKLEAQVKQVEHENMLSLRHNSRIHVRPSRANTLATSDVSRRKWLIPGAEYSIFTGQPLDTQDSNVDNQLEETCSLGHRSPLEKDSSPGSSSTSLLIKKQRETSDTPIMRALKELDEGKIFKNWGTQTEKEDTSNINPRQTETSVNASRSPEKCAQQRQKRLNSASQRSSSLPPSNRKSSTPTKREIMLTPVTVAYSPKRSPKENLSPGFSHLLSKNESSPIRFDILLDDLDTVPVSTLQRTNPRKQLQFLPLDDSEEKTYSEKATDNHVNHSSCPEPVPNGVKKVSVRTAWEKNKSVSYEQCKPVSVTPQGNDFEYTAKIRTLAETERFFDELTKEKDQIEAALSRMPSPGGRITLQTRLNQEALEDRLERINRELGSVRMTLKKFHVLRTSANL.

Disordered stretches follow at residues 28-52, 300-334, and 472-495; these read GLNLNTDRSSPHLSTNGVSSFSGKT, KLKQNQPKRAHVEDGGSRSKQGNEQSKKTPIEKSD, and ISFSPDSVLEPSMSSPSDIDSFSQ. Positions 324 to 334 are enriched in basic and acidic residues; that stretch reads QSKKTPIEKSD. A required for its centrosomal localization region spans residues 401–800; sequence TSNEMKLPSL…EAQVKQVEHE (400 aa). The interaction with CEP97 stretch occupies residues 451–500; sequence KPKQQISGIQPHGLPNALDDRISFSPDSVLEPSMSSPSDIDSFSQASNVT. The segment covering 483–495 has biased composition (low complexity); sequence SMSSPSDIDSFSQ. Positions 609–804 form a coiled coil; the sequence is DLRAYYESEI…KQVEHENMLS (196 aa). Position 781 is a phosphoserine; by TTBK2 (serine 781). Lysine 784 is covalently cross-linked (Glycyl lysine isopeptide (Lys-Gly) (interchain with G-Cter in ubiquitin)). Phosphoserine; by TTBK2 is present on serine 788. The interaction with KIF24 stretch occupies residues 801–1031; that stretch reads NMLSLRHNSR…PVSTLQRTNP (231 aa). Disordered stretches follow at residues 863–894 and 910–999; these read LGHRSPLEKDSSPGSSSTSLLIKKQRETSDTP and NWGT…GFSH. Residues 921 to 936 show a composition bias toward polar residues; that stretch reads SNINPRQTETSVNASR. Over residues 949-967 the composition is skewed to low complexity; the sequence is LNSASQRSSSLPPSNRKSS. Phosphoserine is present on serine 994. Residues 1109–1174 adopt a coiled-coil conformation; sequence RTLAETERFF…GSVRMTLKKF (66 aa).

Interacts with CCP110, CEP97 and KIF24. In terms of processing, TTBK2-mediated phosphorylation at Ser-781 and Ser-788, promotes its ubiquitination at Lys-784 leading to proteasomal degradation, loss of MPHOSPH9 facilitates the removal of the CP110-CEP97 complex from the mother centrioles, promoting the initiation of ciliogenesis. Phosphorylated in M (mitotic) phase. Ubiquitinated at Lys-784, leading to proteasomal degradation.

It is found in the cytoplasm. It localises to the cytoskeleton. Its subcellular location is the microtubule organizing center. The protein localises to the centrosome. The protein resides in the centriole. It is found in the golgi apparatus membrane. Negatively regulates cilia formation by recruiting the CP110-CEP97 complex (a negative regulator of ciliogenesis) at the distal end of the mother centriole in ciliary cells. At the beginning of cilia formation, MPHOSPH9 undergoes TTBK2-mediated phosphorylation and degradation via the ubiquitin-proteasome system and removes itself and the CP110-CEP97 complex from the distal end of the mother centriole, which subsequently promotes cilia formation. The sequence is that of M-phase phosphoprotein 9 (MPHOSPH9) from Homo sapiens (Human).